Reading from the N-terminus, the 200-residue chain is Probable nicotinate-nucleotide adenylyltransferase (200 aa).

This sequence belongs to the NadD family.

It catalyses the reaction nicotinate beta-D-ribonucleotide + ATP + H(+) = deamido-NAD(+) + diphosphate. Its pathway is cofactor biosynthesis; NAD(+) biosynthesis; deamido-NAD(+) from nicotinate D-ribonucleotide: step 1/1. Functionally, catalyzes the reversible adenylation of nicotinate mononucleotide (NaMN) to nicotinic acid adenine dinucleotide (NaAD). This Clostridium botulinum (strain Alaska E43 / Type E3) protein is Probable nicotinate-nucleotide adenylyltransferase.